A 190-amino-acid polypeptide reads, in one-letter code: dTTP/UTP pyrophosphatase (190 aa).

Residue Asp-71 is the Proton acceptor of the active site.

This sequence belongs to the Maf family. YhdE subfamily. It depends on a divalent metal cation as a cofactor.

It localises to the cytoplasm. It carries out the reaction dTTP + H2O = dTMP + diphosphate + H(+). The enzyme catalyses UTP + H2O = UMP + diphosphate + H(+). Nucleoside triphosphate pyrophosphatase that hydrolyzes dTTP and UTP. May have a dual role in cell division arrest and in preventing the incorporation of modified nucleotides into cellular nucleic acids. The polypeptide is dTTP/UTP pyrophosphatase (Xanthomonas oryzae pv. oryzae (strain MAFF 311018)).